A 1358-amino-acid polypeptide reads, in one-letter code: DNA mismatch repair protein Msh6 (1358 aa).

The tract at residues 1–87 is disordered; the sequence is MSRQSTLYSF…SSAQAVPPSS (87 aa). A phosphoserine mark is found at S14, S38, and S40. Over residues 25 to 46 the composition is skewed to low complexity; sequence AEASRQGAAASGASASRGGDAA. Residue K67 is modified to N6-acetyllysine. Positions 76–87 are enriched in low complexity; that stretch reads ASSSAQAVPPSS. Phosphoserine occurs at positions 91, 137, 200, 219, and 227. A PWWP domain is found at 92–154; that stretch reads PGDLVWAKME…KRMLKPYTGS (63 aa). The segment at 197-360 is disordered; that stretch reads DEPSEPEEEE…VSGGGNDSSG (164 aa). 2 stretches are compositionally biased toward acidic residues: residues 198 to 209 and 219 to 231; these read EPSEPEEEEETE and SEED…EEEA. Over residues 240-249 the composition is skewed to basic residues; that stretch reads RSSRQVKKRR. 4 positions are modified to phosphoserine: S252, S254, S256, and S261. Residues 263–273 show a composition bias toward basic and acidic residues; that stretch reads VEFKPDTKQEG. Residue T269 is modified to Phosphothreonine. Phosphoserine is present on residues S274, S275, S279, and S280. Polar residues predominate over residues 329-351; it reads LSETKSTLSAFSAPQNSESQTHV. T487 bears the Phosphothreonine mark. K503 carries the post-translational modification N6-acetyllysine. Phosphoserine is present on residues S827 and S932. T1007 carries the post-translational modification Phosphothreonine. Residue 1132-1139 coordinates ATP; it reads GPNMGGKS.

It belongs to the DNA mismatch repair MutS family. As to quaternary structure, component of the DNA mismatch repair (MMR) complex composed at least of MSH2, MSH3, MSH6, PMS1 and MLH1. Heterodimer consisting of MSH2-MSH6 (MutS alpha). Forms a ternary complex with MutL alpha (MLH1-PMS1). Interacts with MCM9. Part of the BRCA1-associated genome surveillance complex (BASC), which contains BRCA1, MSH2, MSH6, MLH1, ATM, BLM, PMS2 and the RAD50-MRE11-NBS1 protein complex. This association could be a dynamic process changing throughout the cell cycle and within subnuclear domains. In terms of processing, phosphorylated by PRKCZ, which may prevent MutS alpha degradation by the ubiquitin-proteasome pathway.

The protein resides in the nucleus. The protein localises to the chromosome. In terms of biological role, component of the post-replicative DNA mismatch repair system (MMR). Heterodimerizes with MSH2 to form MutS alpha, which binds to DNA mismatches thereby initiating DNA repair. When bound, MutS alpha bends the DNA helix and shields approximately 20 base pairs, and recognizes single base mismatches and dinucleotide insertion-deletion loops (IDL) in the DNA. After mismatch binding, forms a ternary complex with the MutL alpha heterodimer, which is thought to be responsible for directing the downstream MMR events, including strand discrimination, excision, and resynthesis. ATP binding and hydrolysis play a pivotal role in mismatch repair functions. The ATPase activity associated with MutS alpha regulates binding similar to a molecular switch: mismatched DNA provokes ADP--&gt;ATP exchange, resulting in a discernible conformational transition that converts MutS alpha into a sliding clamp capable of hydrolysis-independent diffusion along the DNA backbone. This transition is crucial for mismatch repair. MutS alpha may also play a role in DNA homologous recombination repair. Recruited on chromatin in G1 and early S phase via its PWWP domain that specifically binds trimethylated 'Lys-36' of histone H3 (H3K36me3): early recruitment to chromatin to be replicated allowing a quick identification of mismatch repair to initiate the DNA mismatch repair reaction. The sequence is that of DNA mismatch repair protein Msh6 from Mus musculus (Mouse).